A 183-amino-acid chain; its full sequence is MKGGRRGQVPVKQNQHRLNGEIRGVREVRLTGADGESVGIVSIQEALATAEESGLDLVEISPNAEPPVCRVMDYGKFLFEKSKATKEQKKKQKQIQIKELKFRPGTDVGDYQVKLRNLIRFLEEGNKVKVTIRFRGREMAHQDIGVDVLNRLKEDTDEFAVVESFPTKIEARQMIMVLAPKKK.

This sequence belongs to the IF-3 family. As to quaternary structure, monomer.

Its subcellular location is the cytoplasm. Functionally, IF-3 binds to the 30S ribosomal subunit and shifts the equilibrium between 70S ribosomes and their 50S and 30S subunits in favor of the free subunits, thus enhancing the availability of 30S subunits on which protein synthesis initiation begins. The polypeptide is Translation initiation factor IF-3 (Vibrio cholerae serotype O1 (strain ATCC 39315 / El Tor Inaba N16961)).